Consider the following 395-residue polypeptide: Putative 8-amino-7-oxononanoate synthase (395 aa).

R23 serves as a coordination point for substrate. Residue 110-111 participates in pyridoxal 5'-phosphate binding; the sequence is GY. H135 is a substrate binding site. Pyridoxal 5'-phosphate is bound by residues S182, 207 to 210, and 239 to 242; these read DEAH and TFSK. K242 is modified (N6-(pyridoxal phosphate)lysine). T356 serves as a coordination point for substrate.

This sequence belongs to the class-II pyridoxal-phosphate-dependent aminotransferase family. BioF subfamily. In terms of assembly, homodimer. Pyridoxal 5'-phosphate serves as cofactor.

The catalysed reaction is 6-carboxyhexanoyl-[ACP] + L-alanine + H(+) = (8S)-8-amino-7-oxononanoate + holo-[ACP] + CO2. Its pathway is cofactor biosynthesis; biotin biosynthesis. Catalyzes the decarboxylative condensation of pimeloyl-[acyl-carrier protein] and L-alanine to produce 8-amino-7-oxononanoate (AON), [acyl-carrier protein], and carbon dioxide. This chain is Putative 8-amino-7-oxononanoate synthase (bioF), found in Bacillus cereus (strain G9842).